The sequence spans 226 residues: Phosphoribosylformylglycinamidine synthase subunit PurQ (226 aa).

In terms of domain architecture, Glutamine amidotransferase type-1 spans 2 to 225; that stretch reads RFGIVVFPGS…MHYLEGGKNN (224 aa). The Nucleophile role is filled by Cys-86. Residues His-194 and Glu-196 contribute to the active site.

Part of the FGAM synthase complex composed of 1 PurL, 1 PurQ and 2 PurS subunits.

It localises to the cytoplasm. It catalyses the reaction N(2)-formyl-N(1)-(5-phospho-beta-D-ribosyl)glycinamide + L-glutamine + ATP + H2O = 2-formamido-N(1)-(5-O-phospho-beta-D-ribosyl)acetamidine + L-glutamate + ADP + phosphate + H(+). The enzyme catalyses L-glutamine + H2O = L-glutamate + NH4(+). It participates in purine metabolism; IMP biosynthesis via de novo pathway; 5-amino-1-(5-phospho-D-ribosyl)imidazole from N(2)-formyl-N(1)-(5-phospho-D-ribosyl)glycinamide: step 1/2. Functionally, part of the phosphoribosylformylglycinamidine synthase complex involved in the purines biosynthetic pathway. Catalyzes the ATP-dependent conversion of formylglycinamide ribonucleotide (FGAR) and glutamine to yield formylglycinamidine ribonucleotide (FGAM) and glutamate. The FGAM synthase complex is composed of three subunits. PurQ produces an ammonia molecule by converting glutamine to glutamate. PurL transfers the ammonia molecule to FGAR to form FGAM in an ATP-dependent manner. PurS interacts with PurQ and PurL and is thought to assist in the transfer of the ammonia molecule from PurQ to PurL. This Alkaliphilus metalliredigens (strain QYMF) protein is Phosphoribosylformylglycinamidine synthase subunit PurQ.